Consider the following 112-residue polypeptide: UPF0102 protein C8J_0145 (112 aa).

Belongs to the UPF0102 family.

The protein is UPF0102 protein C8J_0145 of Campylobacter jejuni subsp. jejuni serotype O:6 (strain 81116 / NCTC 11828).